The primary structure comprises 1860 residues: Golgi-specific brefeldin A-resistance guanine nucleotide exchange factor 1 (1860 aa).

Residues 1 to 211 form a DCB; DCB:DCB domain and DCB:HUS domain interaction region; it reads MVDKNIYIIQ…EPKNYVGTNM (211 aa). The interval 1–381 is interaction with RAB1B; the sequence is MVDKNIYIIQ…SVHDMDYVNP (381 aa). Disordered stretches follow at residues 215-266 and 281-372; these read KMRA…GGMP and AASA…DSAS. Basic residues predominate over residues 227-241; that stretch reads WKKQKRSPRPPRHMT. Composition is skewed to polar residues over residues 250 to 262, 290 to 301, and 335 to 351; these read PTPN…SNLT, TDSGLEFSSQTT, and DLQQ…SASV. 2 positions are modified to phosphoserine: serine 350 and serine 353. Threonine 508 is subject to Phosphothreonine. An HUS; DCB:HUS domain interaction region spans residues 531-551; sequence RIPSFVTELYINYDCDYYCSN. A compositionally biased stretch (basic and acidic residues) spans 620–631; the sequence is TREASNTERTAS. The interval 620-666 is disordered; the sequence is TREASNTERTASDGKAVGMASDIPGLHLPGGGRLPPEHGKSGCSDLE. Serine 663 carries the post-translational modification Phosphoserine. Residues 693–883 form the SEC7 domain; it reads ELIEIKNKKK…EDMYHAIKNE (191 aa). Residues 887–1371 form a phosphatidylinositol-phosphate binding; required for translocation to the leading edge and for ARF1 activation upon GPCR signaling region; the sequence is MPEEQTGLVR…PSRPGPSPLI (485 aa). Over residues 1285–1297 the composition is skewed to low complexity; that stretch reads QATARADAPDAGA. The interval 1285–1336 is disordered; the sequence is QATARADAPDAGAQSDSELPSYHQNDVSLDRGYTSDSEVYTDHGRPGKIHRS. Residues 1298-1311 are compositionally biased toward polar residues; that stretch reads QSDSELPSYHQNDV. Residue serine 1299 is modified to Phosphoserine. The residue at position 1317 (tyrosine 1317) is a Phosphotyrosine. A phosphoserine mark is found at serine 1319, serine 1321, and serine 1336. Phosphothreonine; by AMPK is present on threonine 1338. Disordered stretches follow at residues 1351-1371, 1431-1484, and 1726-1809; these read GKDD…SPLI, CKSQ…DEGV, and PMPM…QPPL. Over residues 1433–1447 the composition is skewed to basic and acidic residues; it reads SQEKRGKSHKYDSKG. The segment covering 1465–1474 has biased composition (polar residues); sequence TSSQHASRGG. Phosphoserine is present on residues serine 1476, serine 1774, and serine 1785. Residues 1775 to 1792 show a composition bias toward low complexity; that stretch reads PRAASSSSPGSPVASSPS.

As to quaternary structure, can form homodimers and probably homotetramers. Interacts with COPG1; the interaction is independent of ARF1 activation. Interacts with ARF1, ARF3, ARF4 and ARF5. Interacts with RAB1B (GTP-bound form); required for GBF1 membrane association. Interacts with GGA1, GGA2 and GGA3. Interacts with USO1. Interacts (via SEC7 domain) with PNPLA2 (via C-terminus); the interaction is direct. Interacts with ARMH3. In terms of assembly, (Microbial infection) Interacts with poliovirus protein 3A. In terms of processing, AMPK-mediated phosphorylation at Thr-1338 is induced by 2-deoxyglucose (2-DG) and AICA ribonucleotide, and occurs during mitosis leading to membrane disassociation and inactivation of ARF1 during mitosis. As to expression, ubiquitous.

The protein resides in the golgi apparatus. It localises to the cis-Golgi network. Its subcellular location is the endoplasmic reticulum-Golgi intermediate compartment. It is found in the trans-Golgi network. The protein localises to the cytoplasm. The protein resides in the lipid droplet. It localises to the membrane. Its activity is regulated as follows. Inhibited by brefeldin A (BFA). Inhibited by golgicide A (GCA). Guanine-nucleotide exchange factor (GEF) for members of the Arf family of small GTPases involved in trafficking in the early secretory pathway; its GEF activity initiates the coating of nascent vesicles via the localized generation of activated ARFs through replacement of GDP with GTP. Recruitment to cis-Golgi membranes requires membrane association of Arf-GDP and can be regulated by ARF1, ARF3, ARF4 and ARF5. Involved in the recruitment of the COPI coat complex to the endoplasmic reticulum exit sites (ERES), and the endoplasmic reticulum-Golgi intermediate (ERGIC) and cis-Golgi compartments which implicates ARF1 activation. Involved in COPI vesicle-dependent retrograde transport from the ERGIC and cis-Golgi compartments to the endoplasmic reticulum (ER). Involved in the trans-Golgi network recruitment of GGA1, GGA2, GGA3, BIG1, BIG2, and the AP-1 adaptor protein complex related to chlathrin-dependent transport; the function requires its GEF activity (probably at least in part on ARF4 and ARF5). Has GEF activity towards ARF1. Has in vitro GEF activity towards ARF5. Involved in the processing of PSAP. Required for the assembly of the Golgi apparatus. The AMPK-phosphorylated form is involved in Golgi disassembly during mitotis and under stress conditions. May be involved in the COPI vesicle-dependent recruitment of PNPLA2 to lipid droplets; however, this function is under debate. In neutrophils, involved in G protein-coupled receptor (GPCR)-mediated chemotaxis und superoxide production. Proposed to be recruited by phosphatidylinositol-phosphates generated upon GPCR stimulation to the leading edge where it recruits and activates ARF1, and is involved in recruitment of GIT2 and the NADPH oxidase complex. Plays a role in maintaining mitochondrial morphology. In Homo sapiens (Human), this protein is Golgi-specific brefeldin A-resistance guanine nucleotide exchange factor 1 (GBF1).